We begin with the raw amino-acid sequence, 419 residues long: MSRTPWKSQPCEMVQPSGGPAGDQDVLGEESSLGKPTMLHLPSEQGAPETFQRCLEENQELRDAIRQSNQMLRERCEELQRFQGSQREEKEFLMQKFCEARRLVERLSLEKLELRRQREQALQEVELLKTCQQQMAEDKASVKAQVTSLLGELQESQSRLEAATKERQALESRVRATSEQVRQLENEREALQQQHSVQVDQLRLQSQSMEAALRMERQAASEEKRKLAQLQVAYHQLFQEYDNHIKSSVVSSERNRGLQLEDLKQQLQQAEEALVAKQEVIDKLKEEAEQHKIVMETVPVLKAQADIYKADFQAERQAREQLAERKELLQEQLEQLQREYSRLKTSCQESARIEDMRKRHVEVSQPTLPPAPAHHSFHPALPSQRRSPPEEPPNFCCPKCQYQAPDMDTLQIHVMECIE.

Residues 1 to 46 are disordered; it reads MSRTPWKSQPCEMVQPSGGPAGDQDVLGEESSLGKPTMLHLPSEQG. Positions 1–197 are required for interaction with and ubiquitination by MARCHF2; that stretch reads MSRTPWKSQP…REALQQQHSV (197 aa). Phosphoserine occurs at positions 31, 43, 68, and 85. The segment at 44-111 is interaction with CHUK/IKBKB; it reads EQGAPETFQR…RLVERLSLEK (68 aa). Residues 100–353 are a coiled coil; the sequence is ARRLVERLSL…KTSCQESARI (254 aa). Residues Lys111, Lys139, Lys143, Lys226, Lys246, and Lys264 each participate in a glycyl lysine isopeptide (Lys-Gly) (interchain with G-Cter in ubiquitin) cross-link. Residues 150–257 are interaction with TANK; that stretch reads LGELQESQSR…SVVSSERNRG (108 aa). The tract at residues 242–350 is ubiquitin-binding (UBAN); the sequence is DNHIKSSVVS…SRLKTSCQES (109 aa). Residues 246 to 365 form a self-association region; it reads KSSVVSSERN…MRKRHVEVSQ (120 aa). Residues 251 to 419 form a required for interaction with TNFAIP3 region; it reads SSERNRGLQL…LQIHVMECIE (169 aa). A Glycyl lysine isopeptide (Lys-Gly) (interchain with G-Cter in SUMO); alternate cross-link involves residue Lys277. A Glycyl lysine isopeptide (Lys-Gly) (interchain with G-Cter in ubiquitin); alternate cross-link involves residue Lys277. Glycyl lysine isopeptide (Lys-Gly) (interchain with G-Cter in ubiquitin) cross-links involve residues Lys283, Lys285, Lys292, and Lys302. Lys309 is covalently cross-linked (Glycyl lysine isopeptide (Lys-Gly) (interchain with G-Cter in SUMO); alternate). Lys309 participates in a covalent cross-link: Glycyl lysine isopeptide (Lys-Gly) (interchain with G-Cter in ubiquitin); alternate. Positions 322-343 are leucine-zipper; it reads LAERKELLQEQLEQLQREYSRL. A Glycyl lysine isopeptide (Lys-Gly) (interchain with G-Cter in ubiquitin) cross-link involves residue Lys326. A disordered region spans residues 363–394; that stretch reads VSQPTLPPAPAHHSFHPALPSQRRSPPEEPPN. Residues Ser376 and Ser387 each carry the phosphoserine modification. Positions 382 to 419 are interaction with CYLD; that stretch reads PSQRRSPPEEPPNFCCPKCQYQAPDMDTLQIHVMECIE. The segment at 389–419 adopts a CCHC NOA-type zinc-finger fold; sequence PEEPPNFCCPKCQYQAPDMDTLQIHVMECIE. Residue Cys397 participates in Zn(2+) binding. A Glycyl lysine isopeptide (Lys-Gly) (interchain with G-Cter in ubiquitin) cross-link involves residue Lys399. The Zn(2+) site is built by Cys400, His413, and Cys417.

In terms of assembly, homodimer; disulfide-linked. Component of the I-kappa-B-kinase (IKK) core complex consisting of CHUK, IKBKB and IKBKG; probably four alpha/CHUK-beta/IKBKB dimers are associated with four gamma/IKBKG subunits. The IKK core complex seems to associate with regulatory or adapter proteins to form a IKK-signalosome holo-complex. The IKK complex associates with TERF2IP/RAP1, leading to promote IKK-mediated phosphorylation of RELA/p65. Part of a complex composed of NCOA2, NCOA3, CHUK/IKKA, IKBKB, IKBKG and CREBBP. Interacts with COPS3, CYLD, NALP2, TRPC4AP and PIDD1. Interacts with ATM; the complex is exported from the nucleus. Interacts with TRAF6. Interacts with IKBKE. Interacts with TANK; the interaction is enhanced by IKBKE and TBK1. Part of a ternary complex consisting of TANK, IKBKB and IKBKG. Interacts with ZFAND5. Interacts with RIPK2. Interacts with TNIP1 and TNFAIP3; TNIP1 facilitates the TNFAIP3-mediated de-ubiquitination of IKBKG. Interacts with TNFAIP3; the interaction is induced by TNF stimulation and by polyubiquitin. Binds (via UBAN region) polyubiquitin; binds both 'Lys-63'-linked and linear polyubiquitin, with higher affinity for linear ubiquitin. Interacts with NLRP10. Interacts with TANK; this interaction increases in response to DNA damage. Interacts with USP10; this interaction increases in response to DNA damage. Interacts with ZC3H12A; this interaction increases in response to DNA damage. Interacts with IFIT5; the interaction synergizes the recruitment of IKK to MAP3K7 and enhances IKK phosphorylation. Interacts with TRIM29; this interaction induces IKBKG/NEMO ubiquitination and proteolytic degradation. Interacts with TRIM13; this interaction leads to IKBKG/NEMO ubiquitination. Interacts with ARFIP2. Interacts with RIPK1. Interacts with (ubiquitinated) BCL10; interaction with polyubiquitinated BCL10 via both 'Lys-63'-linked and linear ubiquitin is required for TCR-induced NF-kappa-B activation. Interacts with MARCHF2; during the late stages of macrophage viral and bacterial infection; the interaction leads to ubiquitination and degradation of IKBKG/NEMO. Post-translationally, phosphorylation at Ser-68 attenuates aminoterminal homodimerization. Polyubiquitinated on Lys-285 via 'Lys-63'-linked ubiquitin; the ubiquitination is mediated downstream of NOD2 and RIPK2 and probably plays a role in signaling by facilitating interactions with ubiquitin domain-containing proteins and activates the NF-kappa-B pathway. Polyubiquitinated on Lys-285 and Lys-399 through 'Lys-63'-linked ubiquitin; the ubiquitination is mediated by BCL10, MALT1 and TRAF6 and probably plays a role in signaling by facilitating interactions with ubiquitin domain-containing proteins and activates the NF-kappa-B pathway. Monoubiquitinated on Lys-277 and Lys-309; promotes nuclear export. Polyubiquitinated through 'Lys-27' by TRIM23; involved in antiviral innate and inflammatory responses. Linear polyubiquitinated on Lys-111, Lys-143, Lys-226, Lys-246, Lys-264, Lys-277, Lys-285, Lys-292, Lys-302, Lys-309 and Lys-326; the head-to-tail polyubiquitination is mediated by the LUBAC complex and plays a key role in NF-kappa-B activation. Deubiquitinated by USP10 in a TANK-dependent and -independent manner, leading to the negative regulation of NF-kappa-B signaling upon DNA damage. Ubiquitinated at Lys-326 by MARCHF2 following bacterial and viral infection which leads to its degradation. In terms of processing, sumoylated on Lys-277 and Lys-309 with SUMO1; the modification results in phosphorylation of Ser-85 by ATM leading to a replacement of the sumoylation by mono-ubiquitination on these residues. Post-translationally, neddylated by TRIM40, resulting in stabilization of NFKBIA and down-regulation of NF-kappa-B activity. (Microbial infection) Cleaved by porcine reproductive and respiratory syndrome virus serine protease nsp4 after Glu-349. The cleavage inhibits NEMO proper function.

Its subcellular location is the cytoplasm. The protein localises to the nucleus. Regulatory subunit of the IKK core complex which phosphorylates inhibitors of NF-kappa-B thus leading to the dissociation of the inhibitor/NF-kappa-B complex and ultimately the degradation of the inhibitor. Its binding to scaffolding polyubiquitin plays a key role in IKK activation by multiple signaling receptor pathways. Can recognize and bind both 'Lys-63'-linked and linear polyubiquitin upon cell stimulation, with a much highr affinity for linear polyubiquitin. Could be implicated in NF-kappa-B-mediated protection from cytokine toxicity. Essential for viral activation of IRF3. Involved in TLR3- and IFIH1-mediated antiviral innate response; this function requires 'Lys-27'-linked polyubiquitination. The sequence is that of NF-kappa-B essential modulator (IKBKG) from Sus scrofa (Pig).